The chain runs to 606 residues: Threonine dehydratase 1 biosynthetic, chloroplastic (606 aa).

At Lys154 the chain carries N6-(pyridoxal phosphate)lysine. 2 ACT-like domains span residues Ala432–Asp504 and Leu526–Leu597.

The protein belongs to the serine/threonine dehydratase family. Requires pyridoxal 5'-phosphate as cofactor. In terms of tissue distribution, expressed constitutively in all tissues examined including root, stem, petiole, leaf, immature flower bud, unopened flower and opened flower with the highest expression in opened flower and lowest in leaf.

The protein localises to the plastid. Its subcellular location is the chloroplast. It catalyses the reaction L-threonine = 2-oxobutanoate + NH4(+). It participates in amino-acid biosynthesis; L-isoleucine biosynthesis; 2-oxobutanoate from L-threonine: step 1/1. Strongly inhibited by 1 mM isoleucine. In terms of biological role, has a housekeeping role in isoleucine biosynthesis. This Solanum lycopersicum (Tomato) protein is Threonine dehydratase 1 biosynthetic, chloroplastic.